Here is a 624-residue protein sequence, read N- to C-terminus: Outer dynein arm-docking complex subunit 4 (624 aa).

8 TPR repeats span residues 11 to 44, 46 to 78, 79 to 112, 273 to 309, 318 to 351, 358 to 391, 395 to 428, and 435 to 468; these read FPSY…QSGD, NCLV…DPTF, CKGI…RPDR, LKSL…NQEE, GNLY…AKEH, SRAL…AKTT, TWLF…AEEE, and LNAS…AKLV. Residues 511-624 are disordered; that stretch reads MSQMDLQGAS…VQKLEKTKEE (114 aa). Basic and acidic residues-rich tracts occupy residues 520–557, 576–588, and 595–624; these read SEKE…DRKS, IRRE…RRLS, and PSED…TKEE.

In terms of assembly, component of the outer dynein arm-docking complex along with ODAD1, ODAD2, and ODAD3. Interacts with ODAD1; this interaction may facilitate the recruitment and/or attachment of outer dynein arm docking complex proteins, including ODAD1, ODAD3 and ODAD2, to ciliary axonemes. Interacts with components of the IFT complex A, including IFT140, TTC21B/IFT139 and WDR19/IFT144, and the IFT complex B, including IFT46, IFT52 and IFT57. Interacts with CFAP53.

The protein resides in the cell projection. The protein localises to the cilium. It localises to the cytoplasm. It is found in the cytoskeleton. Its subcellular location is the cilium axoneme. Component of the outer dynein arm-docking complex (ODA-DC) that mediates outer dynein arms (ODA) binding onto the doublet microtubule. Plays an essential role for the assembly of ODA-DC and for the docking of ODA in ciliary axoneme. The chain is Outer dynein arm-docking complex subunit 4 (Odad4) from Mus musculus (Mouse).